Reading from the N-terminus, the 248-residue chain is Putative homeobox-leucine zipper protein HOX26 (248 aa).

The interval 50–118 (KKVAAAAVVA…GDEEGASRKK (69 aa)) is disordered. Basic residues predominate over residues 79–89 (RQRRSCKKGRR). A DNA-binding region (homeobox) is located at residues 114-173 (ASRKKLRLTGEQATLLEDSFRAHNILSHAEKQELAGKLGLSARQVEVWFQNRRARTKLKQ). Positions 172-216 (KQTEADCDLLRRWCDHLAADNARLRRDLAELRRSSSSPPVSGLAV) are leucine-zipper.

It belongs to the HD-ZIP homeobox family. Class II subfamily.

It localises to the nucleus. In terms of biological role, probable transcription factor. This Oryza sativa subsp. japonica (Rice) protein is Putative homeobox-leucine zipper protein HOX26 (HOX26).